The following is a 363-amino-acid chain: Dihydroorotate dehydrogenase (quinone) (363 aa).

FMN-binding positions include 62–66 (AGYDK) and Thr-86. Substrate is bound at residue Lys-66. 111–115 (NRLGF) is a binding site for substrate. Asn-139 and Asn-170 together coordinate FMN. Asn-170 is a binding site for substrate. Ser-173 acts as the Nucleophile in catalysis. Asn-175 provides a ligand contact to substrate. FMN contacts are provided by Lys-215 and Ser-243. 244–245 (NT) contacts substrate. Residues Gly-266, Gly-295, and 316–317 (YS) each bind FMN.

Belongs to the dihydroorotate dehydrogenase family. Type 2 subfamily. As to quaternary structure, monomer. The cofactor is FMN.

It is found in the cell membrane. It carries out the reaction (S)-dihydroorotate + a quinone = orotate + a quinol. It participates in pyrimidine metabolism; UMP biosynthesis via de novo pathway; orotate from (S)-dihydroorotate (quinone route): step 1/1. In terms of biological role, catalyzes the conversion of dihydroorotate to orotate with quinone as electron acceptor. In Agrobacterium fabrum (strain C58 / ATCC 33970) (Agrobacterium tumefaciens (strain C58)), this protein is Dihydroorotate dehydrogenase (quinone).